The chain runs to 569 residues: Serine/threonine-protein kinase gad8 (569 aa).

The tract at residues 19 to 63 (GLNSGGSSFTRGLKNSTLSSTSSRKSSDEKSRKSSEDKRSPQSTV) is disordered. Residues 31 to 42 (LKNSTLSSTSSR) show a composition bias toward low complexity. Over residues 43–58 (KSSDEKSRKSSEDKRS) the composition is skewed to basic and acidic residues. One can recognise a C2 domain in the interval 45 to 202 (SDEKSRKSSE…IVNKLTDEWV (158 aa)). One can recognise a Protein kinase domain in the interval 230-485 (FELLKVVGKG…AQEIKNHPFF (256 aa)). ATP-binding positions include 236 to 244 (VGKGSFGKV) and Lys-259. Asp-353 functions as the Proton acceptor in the catalytic mechanism. Thr-387 bears the Phosphothreonine; by ksg1 mark. Residues 486–557 (DDIDWKKLCA…QRPTTIDTSD (72 aa)) form the AGC-kinase C-terminal domain. Phosphoserine; by TORC2 is present on residues Ser-527 and Ser-546.

Belongs to the protein kinase superfamily. AGC Ser/Thr protein kinase family. In terms of processing, phosphorylated by ksg1 and target of rapamycin complex 2 (TORC2), affecting the kinase activity of gad8 in a nutrient-dependent manner.

The catalysed reaction is L-seryl-[protein] + ATP = O-phospho-L-seryl-[protein] + ADP + H(+). It catalyses the reaction L-threonyl-[protein] + ATP = O-phospho-L-threonyl-[protein] + ADP + H(+). In terms of biological role, involved in a signaling module for sexual development and cell growth under stressed conditions. Required for G1 arrest under nitrogen starvation and for growth at high temperature and osmolarity. In Schizosaccharomyces pombe (strain 972 / ATCC 24843) (Fission yeast), this protein is Serine/threonine-protein kinase gad8.